Consider the following 148-residue polypeptide: SsrA-binding protein (148 aa).

Positions 124–148 (QFDKRETEKDRDWQREKARLMREKA) are disordered.

This sequence belongs to the SmpB family.

It localises to the cytoplasm. Its function is as follows. Required for rescue of stalled ribosomes mediated by trans-translation. Binds to transfer-messenger RNA (tmRNA), required for stable association of tmRNA with ribosomes. tmRNA and SmpB together mimic tRNA shape, replacing the anticodon stem-loop with SmpB. tmRNA is encoded by the ssrA gene; the 2 termini fold to resemble tRNA(Ala) and it encodes a 'tag peptide', a short internal open reading frame. During trans-translation Ala-aminoacylated tmRNA acts like a tRNA, entering the A-site of stalled ribosomes, displacing the stalled mRNA. The ribosome then switches to translate the ORF on the tmRNA; the nascent peptide is terminated with the 'tag peptide' encoded by the tmRNA and targeted for degradation. The ribosome is freed to recommence translation, which seems to be the essential function of trans-translation. The sequence is that of SsrA-binding protein from Ralstonia pickettii (strain 12J).